The sequence spans 431 residues: Glutamate-1-semialdehyde 2,1-aminomutase (431 aa).

An N6-(pyridoxal phosphate)lysine modification is found at Lys265.

The protein belongs to the class-III pyridoxal-phosphate-dependent aminotransferase family. HemL subfamily. As to quaternary structure, homodimer. Pyridoxal 5'-phosphate is required as a cofactor.

It is found in the cytoplasm. The enzyme catalyses (S)-4-amino-5-oxopentanoate = 5-aminolevulinate. It participates in porphyrin-containing compound metabolism; protoporphyrin-IX biosynthesis; 5-aminolevulinate from L-glutamyl-tRNA(Glu): step 2/2. The protein is Glutamate-1-semialdehyde 2,1-aminomutase of Aliivibrio fischeri (strain MJ11) (Vibrio fischeri).